The primary structure comprises 392 residues: Nicotinate phosphoribosyltransferase (392 aa).

H214 bears the Phosphohistidine; by autocatalysis mark.

It belongs to the NAPRTase family. In terms of processing, transiently phosphorylated on a His residue during the reaction cycle. Phosphorylation strongly increases the affinity for substrates and increases the rate of nicotinate D-ribonucleotide production. Dephosphorylation regenerates the low-affinity form of the enzyme, leading to product release.

The enzyme catalyses nicotinate + 5-phospho-alpha-D-ribose 1-diphosphate + ATP + H2O = nicotinate beta-D-ribonucleotide + ADP + phosphate + diphosphate. It participates in cofactor biosynthesis; NAD(+) biosynthesis; nicotinate D-ribonucleotide from nicotinate: step 1/1. In terms of biological role, catalyzes the synthesis of beta-nicotinate D-ribonucleotide from nicotinate and 5-phospho-D-ribose 1-phosphate at the expense of ATP. In Xanthomonas euvesicatoria pv. vesicatoria (strain 85-10) (Xanthomonas campestris pv. vesicatoria), this protein is Nicotinate phosphoribosyltransferase.